A 280-amino-acid chain; its full sequence is Polyamine aminopropyltransferase (280 aa).

The region spanning 2-235 (GGWIDEEHRG…GWWSWTFAAV (234 aa)) is the PABS domain. Residue Gln-29 coordinates S-methyl-5'-thioadenosine. 2 residues coordinate spermidine: His-60 and Asp-84. Residues Glu-104 and 136-137 (DG) contribute to the S-methyl-5'-thioadenosine site. Asp-155 functions as the Proton acceptor in the catalytic mechanism. Pro-162 is a binding site for S-methyl-5'-thioadenosine.

This sequence belongs to the spermidine/spermine synthase family. Homodimer or homotetramer.

The protein resides in the cytoplasm. It catalyses the reaction S-adenosyl 3-(methylsulfanyl)propylamine + putrescine = S-methyl-5'-thioadenosine + spermidine + H(+). The protein operates within amine and polyamine biosynthesis; spermidine biosynthesis; spermidine from putrescine: step 1/1. In terms of biological role, catalyzes the irreversible transfer of a propylamine group from the amino donor S-adenosylmethioninamine (decarboxy-AdoMet) to putrescine (1,4-diaminobutane) to yield spermidine. This is Polyamine aminopropyltransferase from Parasynechococcus marenigrum (strain WH8102).